The following is a 64-amino-acid chain: Alpha-toxin Ts5 (64 aa).

Residues 2–64 (KDGYPVEGDN…KEPTKTSGRC (63 aa)) enclose the LCN-type CS-alpha/beta domain. 4 disulfides stabilise this stretch: cysteine 12–cysteine 64, cysteine 16–cysteine 38, cysteine 24–cysteine 44, and cysteine 28–cysteine 46.

It belongs to the long (4 C-C) scorpion toxin superfamily. Sodium channel inhibitor family. Alpha subfamily. In terms of tissue distribution, expressed by the venom gland.

Its subcellular location is the secreted. Alpha toxins bind voltage-independently at site-3 of sodium channels (Nav) and inhibit the inactivation of the activated channels, thereby blocking neuronal transmission. By extending the depolarized period it indirectly affects beta-cell voltage-dependent potassium channels, thus increasing potassium permeability. The protein is Alpha-toxin Ts5 of Tityus serrulatus (Brazilian scorpion).